The chain runs to 312 residues: DNA-directed RNA polymerase subunit alpha (312 aa).

The tract at residues 1–225 is alpha N-terminal domain (alpha-NTD); that stretch reads MIEFEKPNIT…VEHFKVFESA (225 aa). The segment at 243–312 is alpha C-terminal domain (alpha-CTD); the sequence is KEKKLEMTIE…DLGLSLRQED (70 aa).

Belongs to the RNA polymerase alpha chain family. As to quaternary structure, homodimer. The RNAP catalytic core consists of 2 alpha, 1 beta, 1 beta' and 1 omega subunit. When a sigma factor is associated with the core the holoenzyme is formed, which can initiate transcription.

The enzyme catalyses RNA(n) + a ribonucleoside 5'-triphosphate = RNA(n+1) + diphosphate. Functionally, DNA-dependent RNA polymerase catalyzes the transcription of DNA into RNA using the four ribonucleoside triphosphates as substrates. This Lactobacillus helveticus (strain DPC 4571) protein is DNA-directed RNA polymerase subunit alpha.